Consider the following 210-residue polypeptide: Somatotropin-1 (210 aa).

Positions 1 to 22 (MARALVLLSVVLVSLLVNQGRA) are cleaved as a signal peptide. Residue histidine 38 coordinates Zn(2+). Cysteine 71 and cysteine 183 are disulfide-bonded. Glutamate 192 contacts Zn(2+). Cysteine 200 and cysteine 208 are oxidised to a cystine.

This sequence belongs to the somatotropin/prolactin family.

The protein localises to the secreted. Its function is as follows. Growth hormone plays an important role in growth control and is involved in the regulation of several anabolic processes. Implicated as an osmoregulatory substance important for seawater adaptation. The chain is Somatotropin-1 (gh1) from Carassius auratus (Goldfish).